We begin with the raw amino-acid sequence, 467 residues long: Dimethylamine methyltransferase MtbB3 (467 aa).

Pyl356 is a non-standard amino acid (pyrrolysine).

It belongs to the dimethylamine methyltransferase family.

It catalyses the reaction Co(I)-[dimethylamine-specific corrinoid protein] + dimethylamine + H(+) = methyl-Co(III)-[dimethylamine-specific corrinoid protein] + methylamine. Its pathway is one-carbon metabolism; methanogenesis from dimethylamine. Functionally, catalyzes the transfer of a methyl group from dimethylamine to the corrinoid cofactor of MtbC. In Methanosarcina acetivorans (strain ATCC 35395 / DSM 2834 / JCM 12185 / C2A), this protein is Dimethylamine methyltransferase MtbB3 (mtbB3).